Here is a 469-residue protein sequence, read N- to C-terminus: Probable Xaa-Pro aminopeptidase AN0832 (469 aa).

Residues Asp-260, Asp-271, Glu-398, and Glu-437 each coordinate Mn(2+).

It belongs to the peptidase M24B family. Mn(2+) serves as cofactor.

It catalyses the reaction Release of any N-terminal amino acid, including proline, that is linked to proline, even from a dipeptide or tripeptide.. Functionally, catalyzes the removal of a penultimate prolyl residue from the N-termini of peptides. This chain is Probable Xaa-Pro aminopeptidase AN0832, found in Emericella nidulans (strain FGSC A4 / ATCC 38163 / CBS 112.46 / NRRL 194 / M139) (Aspergillus nidulans).